We begin with the raw amino-acid sequence, 498 residues long: ATP synthase subunit beta, chloroplastic (498 aa).

Residue 172–179 coordinates ATP; that stretch reads GGAGVGKT.

This sequence belongs to the ATPase alpha/beta chains family. As to quaternary structure, F-type ATPases have 2 components, CF(1) - the catalytic core - and CF(0) - the membrane proton channel. CF(1) has five subunits: alpha(3), beta(3), gamma(1), delta(1), epsilon(1). CF(0) has four main subunits: a(1), b(1), b'(1) and c(9-12).

The protein resides in the plastid. It localises to the chloroplast thylakoid membrane. The enzyme catalyses ATP + H2O + 4 H(+)(in) = ADP + phosphate + 5 H(+)(out). Its function is as follows. Produces ATP from ADP in the presence of a proton gradient across the membrane. The catalytic sites are hosted primarily by the beta subunits. The chain is ATP synthase subunit beta, chloroplastic from Chamaerops humilis (Mediterranean fan palm).